The following is a 275-amino-acid chain: MDTDHRPQAEGAVLTPSAEAPPVAAPRIDCRDIRVFYGADQAIHNVSLSFPDRAVTALIGPSGCGKSTFLRCLNRMNDTIENCRVEGQILMDGQDINDHSIDPVLLRSRVGMVFQKPNPFPKSIYDNIAYGPRIHGLASSREDLDAIVEKSLRRAGLWEEVKDRLQAPGTSLSGGQQQRLCIARAIAVRPEVILMDEPCSALDPVATARIEELIDELRKRYCIVIVTHSMQQAARVSQRTAFFHLGNLIEMGETEQIFTNPREKRTEDYITGRFG.

Residues isoleucine 28–isoleucine 270 enclose the ABC transporter domain. ATP is bound at residue glycine 60–serine 67.

It belongs to the ABC transporter superfamily. Phosphate importer (TC 3.A.1.7) family. As to quaternary structure, the complex is composed of two ATP-binding proteins (PstB), two transmembrane proteins (PstC and PstA) and a solute-binding protein (PstS).

It is found in the cell inner membrane. The enzyme catalyses phosphate(out) + ATP + H2O = ADP + 2 phosphate(in) + H(+). In terms of biological role, part of the ABC transporter complex PstSACB involved in phosphate import. Responsible for energy coupling to the transport system. This Hyphomonas neptunium (strain ATCC 15444) protein is Phosphate import ATP-binding protein PstB.